The primary structure comprises 105 residues: Large ribosomal subunit protein bL21 (105 aa).

This sequence belongs to the bacterial ribosomal protein bL21 family. In terms of assembly, part of the 50S ribosomal subunit. Contacts protein L20.

This protein binds to 23S rRNA in the presence of protein L20. The chain is Large ribosomal subunit protein bL21 from Aliarcobacter butzleri (strain RM4018) (Arcobacter butzleri).